Reading from the N-terminus, the 339-residue chain is RNA 3'-terminal phosphate cyclase (339 aa).

Residues Gln-103 and 283–287 (HLADQ) each bind ATP. Catalysis depends on His-308, which acts as the Tele-AMP-histidine intermediate.

This sequence belongs to the RNA 3'-terminal cyclase family. Type 1 subfamily.

The protein resides in the cytoplasm. It catalyses the reaction a 3'-end 3'-phospho-ribonucleotide-RNA + ATP = a 3'-end 2',3'-cyclophospho-ribonucleotide-RNA + AMP + diphosphate. Its function is as follows. Catalyzes the conversion of 3'-phosphate to a 2',3'-cyclic phosphodiester at the end of RNA. The mechanism of action of the enzyme occurs in 3 steps: (A) adenylation of the enzyme by ATP; (B) transfer of adenylate to an RNA-N3'P to produce RNA-N3'PP5'A; (C) and attack of the adjacent 2'-hydroxyl on the 3'-phosphorus in the diester linkage to produce the cyclic end product. The biological role of this enzyme is unknown but it is likely to function in some aspects of cellular RNA processing. The polypeptide is RNA 3'-terminal phosphate cyclase (Salmonella enteritidis PT4 (strain P125109)).